We begin with the raw amino-acid sequence, 862 residues long: Kinesin-like protein KIN-7E (862 aa).

Residues 24 to 346 (KILVLVRLRP…LLFACCAKEV (323 aa)) enclose the Kinesin motor domain. An ATP-binding site is contributed by 110 to 117 (GQTSSGKT). A coiled-coil region spans residues 355–428 (VMSDKALVKQ…RLEDFMKMVE (74 aa)). Disordered stretches follow at residues 463–505 (RTSF…QSEE) and 542–632 (ANGE…TPLV). Polar residues predominate over residues 465–476 (SFISDGTSTPLS). Residues 494 to 505 (MSPRHSGDQSEE) show a composition bias toward basic and acidic residues. Polar residues predominate over residues 612-621 (DSMTSRGSDS). Residue K734 forms a Glycyl lysine isopeptide (Lys-Gly) (interchain with G-Cter in ubiquitin) linkage.

It belongs to the TRAFAC class myosin-kinesin ATPase superfamily. Kinesin family. KIN-7 subfamily.

This is Kinesin-like protein KIN-7E from Arabidopsis thaliana (Mouse-ear cress).